A 204-amino-acid polypeptide reads, in one-letter code: UPF0637 protein SAB0972c (204 aa).

It belongs to the UPF0637 family.

In Staphylococcus aureus (strain bovine RF122 / ET3-1), this protein is UPF0637 protein SAB0972c.